A 109-amino-acid chain; its full sequence is Non-structural protein of 12.7 kDa (109 aa).

Belongs to the coronaviruses ns12.7 protein family.

The polypeptide is Non-structural protein of 12.7 kDa (Sus scrofa (Pig)).